The sequence spans 234 residues: Orotidine 5'-phosphate decarboxylase (234 aa).

Substrate-binding positions include D10, K31, 58–67 (DLKLHDIPNT), T121, R183, Q192, G212, and R213. Residue K60 is the Proton donor of the active site.

The protein belongs to the OMP decarboxylase family. Type 1 subfamily. Homodimer.

It catalyses the reaction orotidine 5'-phosphate + H(+) = UMP + CO2. The protein operates within pyrimidine metabolism; UMP biosynthesis via de novo pathway; UMP from orotate: step 2/2. Its function is as follows. Catalyzes the decarboxylation of orotidine 5'-monophosphate (OMP) to uridine 5'-monophosphate (UMP). The sequence is that of Orotidine 5'-phosphate decarboxylase from Lysinibacillus sphaericus (strain C3-41).